A 449-amino-acid chain; its full sequence is Hyaluronidase-1 (449 aa).

The first 39 residues, 1–39, serve as a signal peptide directing secretion; sequence MKPFSPEVSPDPCPATAAHLLRTYTLFLTLLELAQGCRG. 2 disulfide bridges follow: Cys-58-Cys-348 and Cys-222-Cys-236. N-linked (GlcNAc...) asparagine glycosylation is found at Asn-85 and Asn-114. Residue Glu-146 is the Proton donor of the active site. N-linked (GlcNAc...) asparagine glycans are attached at residues Asn-231, Asn-252, and Asn-365. Cystine bridges form between Cys-373–Cys-384, Cys-378–Cys-433, and Cys-435–Cys-444. The EGF-like domain maps to 433 to 444; it reads CRCYRGWSGEWC.

It belongs to the glycosyl hydrolase 56 family.

The protein localises to the secreted. It localises to the lysosome. The catalysed reaction is Random hydrolysis of (1-&gt;4)-linkages between N-acetyl-beta-D-glucosamine and D-glucuronate residues in hyaluronate.. Its function is as follows. May have a role in promoting tumor progression. May block the TGFB1-enhanced cell growth. Overexpression of HYAL1 suppressed the growth rate of colon carcinoma cell tumors in an experimental model. This Rattus norvegicus (Rat) protein is Hyaluronidase-1 (Hyal1).